The chain runs to 427 residues: Diaminobutyrate--2-oxoglutarate transaminase (427 aa).

N6-(pyridoxal phosphate)lysine is present on Lys264.

This sequence belongs to the class-III pyridoxal-phosphate-dependent aminotransferase family. Pyridoxal 5'-phosphate is required as a cofactor.

It carries out the reaction L-2,4-diaminobutanoate + 2-oxoglutarate = L-aspartate 4-semialdehyde + L-glutamate. The protein operates within amine and polyamine biosynthesis; ectoine biosynthesis; L-ectoine from L-aspartate 4-semialdehyde: step 1/3. Functionally, catalyzes reversively the conversion of L-aspartate beta-semialdehyde (ASA) to L-2,4-diaminobutyrate (DABA) by transamination with L-glutamate. The polypeptide is Diaminobutyrate--2-oxoglutarate transaminase (ectB) (Wolinella succinogenes (strain ATCC 29543 / DSM 1740 / CCUG 13145 / JCM 31913 / LMG 7466 / NCTC 11488 / FDC 602W) (Vibrio succinogenes)).